Consider the following 205-residue polypeptide: FMN reductase (NADH) RutF (205 aa).

The tract at residues 171–205 (PRAPRSGSAPAEPARAARALGARPAEGPALALRSA) is disordered.

The protein belongs to the non-flavoprotein flavin reductase family. RutF subfamily.

It catalyses the reaction FMNH2 + NAD(+) = FMN + NADH + 2 H(+). Its function is as follows. Catalyzes the reduction of FMN to FMNH2 which is used to reduce pyrimidine by RutA via the Rut pathway. This Methylorubrum extorquens (strain DSM 6343 / CIP 106787 / DM4) (Methylobacterium extorquens) protein is FMN reductase (NADH) RutF.